Consider the following 180-residue polypeptide: Shikimate kinase (180 aa).

Gly14–Ser19 is an ATP binding site. Ser18 is a Mg(2+) binding site. Residues Asp36, Arg60, and Gly82 each contribute to the substrate site. Arg120 contacts ATP. Arg139 lines the substrate pocket.

The protein belongs to the shikimate kinase family. As to quaternary structure, monomer. The cofactor is Mg(2+).

Its subcellular location is the cytoplasm. It carries out the reaction shikimate + ATP = 3-phosphoshikimate + ADP + H(+). It participates in metabolic intermediate biosynthesis; chorismate biosynthesis; chorismate from D-erythrose 4-phosphate and phosphoenolpyruvate: step 5/7. In terms of biological role, catalyzes the specific phosphorylation of the 3-hydroxyl group of shikimic acid using ATP as a cosubstrate. In Xylella fastidiosa (strain M12), this protein is Shikimate kinase.